We begin with the raw amino-acid sequence, 259 residues long: Protein CDI (259 aa).

Positions 236-259 form a coiled coil; it reads FADLWLNEMEEYNKENKKEADNAK.

As to expression, mostly expressed in pollen grains and pollen tubes, and, at low levels, in seedlings, roots, stems, leaves, flowers and siliques.

It is found in the cytoplasm. It localises to the cytosol. In terms of biological role, probable nucleotide-diphospho-sugar transferase required for pollen germination and tube growth. This chain is Protein CDI, found in Arabidopsis thaliana (Mouse-ear cress).